The chain runs to 175 residues: ATP synthase subunit delta (175 aa).

The protein belongs to the ATPase delta chain family. As to quaternary structure, F-type ATPases have 2 components, F(1) - the catalytic core - and F(0) - the membrane proton channel. F(1) has five subunits: alpha(3), beta(3), gamma(1), delta(1), epsilon(1). F(0) has three main subunits: a(1), b(2) and c(10-14). The alpha and beta chains form an alternating ring which encloses part of the gamma chain. F(1) is attached to F(0) by a central stalk formed by the gamma and epsilon chains, while a peripheral stalk is formed by the delta and b chains.

It localises to the cell membrane. F(1)F(0) ATP synthase produces ATP from ADP in the presence of a proton or sodium gradient. F-type ATPases consist of two structural domains, F(1) containing the extramembraneous catalytic core and F(0) containing the membrane proton channel, linked together by a central stalk and a peripheral stalk. During catalysis, ATP synthesis in the catalytic domain of F(1) is coupled via a rotary mechanism of the central stalk subunits to proton translocation. Its function is as follows. This protein is part of the stalk that links CF(0) to CF(1). It either transmits conformational changes from CF(0) to CF(1) or is implicated in proton conduction. This is ATP synthase subunit delta from Brevibacillus brevis (strain 47 / JCM 6285 / NBRC 100599).